Consider the following 59-residue polypeptide: UPF0434 protein VC_1876 (59 aa).

The protein belongs to the UPF0434 family.

This Vibrio cholerae serotype O1 (strain ATCC 39315 / El Tor Inaba N16961) protein is UPF0434 protein VC_1876.